A 46-amino-acid polypeptide reads, in one-letter code: Osteocalcin 2 (46 aa).

The Gla domain maps to 1–43 (AVPAGTLSPLQMESLREVCEVNVACDEMADTAGIVAAYTXFYG). Phosphothreonine is present on T6. Ca(2+) is bound by residues E13, E17, E20, and D26. E13, E17, and E20 each carry 4-carboxyglutamate. C19 and C25 form a disulfide bridge. E27 carries the 4-carboxyglutamate modification.

The protein belongs to the osteocalcin/matrix Gla protein family. Gamma-carboxyglutamate residues are formed by vitamin K dependent carboxylation by GGCX. These residues are essential for the binding of calcium.

It localises to the secreted. In terms of biological role, the carboxylated form is one of the main organic components of the bone matrix, which constitutes 1-2% of the total bone protein. The carboxylated form binds strongly to apatite and calcium. This Solea senegalensis (Senegalese sole) protein is Osteocalcin 2.